The following is a 122-amino-acid chain: Large ribosomal subunit protein bL12 (122 aa).

Belongs to the bacterial ribosomal protein bL12 family. Homodimer. Part of the ribosomal stalk of the 50S ribosomal subunit. Forms a multimeric L10(L12)X complex, where L10 forms an elongated spine to which 2 to 4 L12 dimers bind in a sequential fashion. Binds GTP-bound translation factors.

Forms part of the ribosomal stalk which helps the ribosome interact with GTP-bound translation factors. Is thus essential for accurate translation. This Staphylococcus epidermidis (strain ATCC 35984 / DSM 28319 / BCRC 17069 / CCUG 31568 / BM 3577 / RP62A) protein is Large ribosomal subunit protein bL12.